Here is a 523-residue protein sequence, read N- to C-terminus: Acetyl-CoA hydrolase (523 aa).

CoA is bound at residue 277-281 (GIGNI). E302 serves as the catalytic 5-glutamyl coenzyme A thioester intermediate. N392 and G396 together coordinate CoA.

The protein belongs to the acetyl-CoA hydrolase/transferase family.

The protein localises to the cytoplasm. The catalysed reaction is acetyl-CoA + H2O = acetate + CoA + H(+). Functionally, presumably involved in regulating the intracellular acetyl-CoA pool for fatty acid and cholesterol synthesis and fatty acid oxidation. The polypeptide is Acetyl-CoA hydrolase (ACH1) (Kluyveromyces lactis (strain ATCC 8585 / CBS 2359 / DSM 70799 / NBRC 1267 / NRRL Y-1140 / WM37) (Yeast)).